The chain runs to 297 residues: HTH-type transcriptional regulator IlvY (297 aa).

The HTH lysR-type domain maps to 1–58 (MDLRDLKTFLHLAESRHFGRSARAMHVSPSTLSRQIQRLEEDLGQPLFVRDNRTVTLT). A DNA-binding region (H-T-H motif) is located at residues 18–37 (FGRSARAMHVSPSTLSRQIQ).

Belongs to the LysR transcriptional regulatory family.

The protein resides in the cytoplasm. This protein activates the transcription of the ilvC gene in the presence of acetolactate or acetohydroxybutyrate. IlvY is also a negative regulator of its own expression. This chain is HTH-type transcriptional regulator IlvY (ilvY), found in Escherichia coli (strain K12).